The primary structure comprises 2094 residues: Protein Ycf2 (2094 aa).

1385 to 1392 contributes to the ATP binding site; it reads GPPETGRS.

It belongs to the Ycf2 family.

It localises to the plastid. The protein localises to the chloroplast stroma. Probable ATPase of unknown function. Its presence in a non-photosynthetic plant (Epifagus virginiana) and experiments in tobacco indicate that it has an essential function which is probably not related to photosynthesis. The polypeptide is Protein Ycf2 (Huperzia lucidula (Shining clubmoss)).